The chain runs to 297 residues: Formylmethanofuran--tetrahydromethanopterin formyltransferase (297 aa).

This sequence belongs to the FTR family. Homotetramer.

It localises to the cytoplasm. The enzyme catalyses N-formylmethanofuran + 5,6,7,8-tetrahydromethanopterin + H(+) = N(5)-formyl-5,6,7,8-tetrahydromethanopterin + methanofuran. The protein operates within one-carbon metabolism; methanogenesis from CO(2); 5,10-methenyl-5,6,7,8-tetrahydromethanopterin from CO(2): step 2/3. Its function is as follows. Catalyzes the reversible transfer of a formyl group from formylmethanofuran (formyl-MFR) to tetrahydromethanopterin (H(4)MPT) to produce 5-formyl tetrahydromethanopterin (5-formyl-H(4)MPT) and methanofuran (MFR). This Methanosarcina mazei (strain ATCC BAA-159 / DSM 3647 / Goe1 / Go1 / JCM 11833 / OCM 88) (Methanosarcina frisia) protein is Formylmethanofuran--tetrahydromethanopterin formyltransferase.